Reading from the N-terminus, the 262-residue chain is GTP cyclohydrolase 1 type 2 homolog (262 aa).

4 residues coordinate a divalent metal cation: histidine 65, aspartate 102, histidine 222, and glutamate 225.

It belongs to the GTP cyclohydrolase I type 2/NIF3 family. Homohexamer.

This is GTP cyclohydrolase 1 type 2 homolog from Streptococcus pyogenes serotype M3 (strain ATCC BAA-595 / MGAS315).